Here is a 127-residue protein sequence, read N- to C-terminus: DNA-directed RNA polymerase subunit omega (127 aa).

Belongs to the RNA polymerase subunit omega family. As to quaternary structure, the RNAP catalytic core consists of 2 alpha, 1 beta, 1 beta' and 1 omega subunit. When a sigma factor is associated with the core the holoenzyme is formed, which can initiate transcription.

It catalyses the reaction RNA(n) + a ribonucleoside 5'-triphosphate = RNA(n+1) + diphosphate. Functionally, promotes RNA polymerase assembly. Latches the N- and C-terminal regions of the beta' subunit thereby facilitating its interaction with the beta and alpha subunits. The sequence is that of DNA-directed RNA polymerase subunit omega from Rickettsia rickettsii (strain Iowa).